The chain runs to 187 residues: Large ribosomal subunit protein eL18y (187 aa).

The disordered stretch occupies residues 151 to 187 (FGPAPGVPHSHSKPYVRAKGRKFEKARGKRKSRGFKV). 2 stretches are compositionally biased toward basic residues: residues 160 to 170 (SHSKPYVRAKG) and 177 to 187 (RGKRKSRGFKV).

The protein belongs to the eukaryotic ribosomal protein eL18 family. Interacts with NIK1. Interacts directly with EXA1. Ubiquitous.

The protein resides in the cytoplasm. In Arabidopsis thaliana (Mouse-ear cress), this protein is Large ribosomal subunit protein eL18y (RPL18B).